The sequence spans 198 residues: Elongation factor Ts (198 aa).

Positions 81–84 (TDFV) are involved in Mg(2+) ion dislocation from EF-Tu.

This sequence belongs to the EF-Ts family.

The protein localises to the cytoplasm. Associates with the EF-Tu.GDP complex and induces the exchange of GDP to GTP. It remains bound to the aminoacyl-tRNA.EF-Tu.GTP complex up to the GTP hydrolysis stage on the ribosome. This is Elongation factor Ts from Pseudothermotoga lettingae (strain ATCC BAA-301 / DSM 14385 / NBRC 107922 / TMO) (Thermotoga lettingae).